The following is a 147-amino-acid chain: UPF0306 protein YhbP (147 aa).

This sequence belongs to the UPF0306 family.

The protein is UPF0306 protein YhbP of Salmonella arizonae (strain ATCC BAA-731 / CDC346-86 / RSK2980).